Consider the following 327-residue polypeptide: Carboxylesterase 20 (327 aa).

The Involved in the stabilization of the negatively charged intermediate by the formation of the oxyanion hole signature appears at 87 to 89 (HGG). Ser166 functions as the Nucleophile in the catalytic mechanism. Catalysis depends on residues Asp272 and His302.

This sequence belongs to the 'GDXG' lipolytic enzyme family. In terms of tissue distribution, expressed in roots, stems, flowers and siliques.

It carries out the reaction a carboxylic ester + H2O = an alcohol + a carboxylate + H(+). With respect to regulation, esterase activity measured in vitro with the synthetic substrate p-nitrophenyl acetate (pNPA) is inhibited by strigolactone. Its function is as follows. Carboxylesterase that possesses esterase activity in vitro with the synthetic substrate p-nitrophenyl acetate (pNPA). Binds strigolactones, but is not able to hydrolyze them. May be involved in the regulation of shoot branching. In Arabidopsis thaliana (Mouse-ear cress), this protein is Carboxylesterase 20.